The following is a 141-amino-acid chain: Drosulfakinins (141 aa).

The N-terminal stretch at 1–31 (MGLRSCTHLATLFMTLWAVAFCFLVVVPIPA) is a signal peptide. Positions 32–73 (QTTSLQNAKDDRRLQELESKIGAESDQTNANLVGPSFSRFGD) are excised as a propeptide. The residue at position 82 (Phe82) is a Phenylalanine amide. The propeptide occupies 86–111 (VPLISRPMIPIELDLLMDNDDERTKA). The residue at position 117 (Tyr117) is a Sulfotyrosine. Phe122 is modified (phenylalanine amide). A Sulfotyrosine modification is found at Tyr134. Phe139 carries the phenylalanine amide modification.

The protein belongs to the gastrin/cholecystokinin family.

The protein localises to the secreted. Drosulfakinin-0 (DSK 0) plays diverse biological roles including regulating gut muscle contraction in adults but not in larvae. The protein is Drosulfakinins of Drosophila simulans (Fruit fly).